The sequence spans 351 residues: MAISAAIGTPLETCLAQAVDANPALKDAAAVVAAVGRSAVEISERIGRGALGGDLAAAGDHNSDGDVQKALDVIAHESVTAALRGAPVAEVASEEAEEVMRLNPDAPLAVAIDPLDGSSNIGVNMAVGMIFGIRPSIKDPANPLASFTTPGSTQIAAGFVTYGPATALILTLGEGTQSYVLDRTEGRFKLTSPAMSVPPSTKEFAINASNARHWDAPVKAYIEDCQRGTEGPRDKDYNMRWLASLVADIQRVLTRGGVFLYPGDARKNYARGRLRLLYEVAPVAMLVEQAGGAATDGQTRILDIVANGIHERAPLVCGSTEEVTCVATYYAGGKPDAGRSPLFGQRGLMRS.

Mg(2+)-binding residues include Glu94, Asp113, Leu115, and Asp116. Substrate contacts are provided by residues Asp116–Ser119 and Asn207. Glu279 serves as a coordination point for Mg(2+).

It belongs to the FBPase class 1 family. In terms of assembly, homotetramer. Requires Mg(2+) as cofactor.

Its subcellular location is the cytoplasm. It carries out the reaction beta-D-fructose 1,6-bisphosphate + H2O = beta-D-fructose 6-phosphate + phosphate. The protein operates within carbohydrate biosynthesis; gluconeogenesis. The protein is Fructose-1,6-bisphosphatase class 1 of Methylobacterium radiotolerans (strain ATCC 27329 / DSM 1819 / JCM 2831 / NBRC 15690 / NCIMB 10815 / 0-1).